We begin with the raw amino-acid sequence, 307 residues long: Cytochrome f (307 aa).

The first 24 residues, 1–24 (MKKNLFLVSVFASLFVGTANNALA), serve as a signal peptide directing secretion. Heme-binding residues include Y25, C45, C48, and H49. The helical transmembrane segment at 273-293 (LQGLVIFLGFVLIAQVFLVLK) threads the bilayer.

The protein belongs to the cytochrome f family. In terms of assembly, the 4 large subunits of the cytochrome b6-f complex are cytochrome b6, subunit IV (17 kDa polypeptide, petD), cytochrome f and the Rieske protein, while the 4 small subunits are PetG, PetL, PetM and PetN. The complex functions as a dimer. Requires heme as cofactor.

The protein resides in the plastid. It localises to the chloroplast thylakoid membrane. Component of the cytochrome b6-f complex, which mediates electron transfer between photosystem II (PSII) and photosystem I (PSI), cyclic electron flow around PSI, and state transitions. This Ostreococcus tauri protein is Cytochrome f.